Here is a 313-residue protein sequence, read N- to C-terminus: Formimidoylglutamase (313 aa).

Residues H130, D155, H157, D159, D241, and D243 each contribute to the Mn(2+) site.

Belongs to the arginase family. The cofactor is Mn(2+).

The enzyme catalyses N-formimidoyl-L-glutamate + H2O = formamide + L-glutamate. Its pathway is amino-acid degradation; L-histidine degradation into L-glutamate; L-glutamate from N-formimidoyl-L-glutamate (hydrolase route): step 1/1. Catalyzes the conversion of N-formimidoyl-L-glutamate to L-glutamate and formamide. In Salmonella typhi, this protein is Formimidoylglutamase.